The primary structure comprises 177 residues: Large ribosomal subunit protein uL6 (177 aa).

The protein belongs to the universal ribosomal protein uL6 family. In terms of assembly, part of the 50S ribosomal subunit.

This protein binds to the 23S rRNA, and is important in its secondary structure. It is located near the subunit interface in the base of the L7/L12 stalk, and near the tRNA binding site of the peptidyltransferase center. This chain is Large ribosomal subunit protein uL6, found in Rickettsia conorii (strain ATCC VR-613 / Malish 7).